The sequence spans 264 residues: 3-methyl-2-oxobutanoate hydroxymethyltransferase (264 aa).

Mg(2+) is bound by residues Asp45 and Asp84. Residues 45–46, Asp84, and Lys112 each bind 3-methyl-2-oxobutanoate; that span reads DS. Glu114 is a Mg(2+) binding site. The active-site Proton acceptor is Glu181.

The protein belongs to the PanB family. As to quaternary structure, homodecamer; pentamer of dimers. Requires Mg(2+) as cofactor.

The protein localises to the cytoplasm. It catalyses the reaction 3-methyl-2-oxobutanoate + (6R)-5,10-methylene-5,6,7,8-tetrahydrofolate + H2O = 2-dehydropantoate + (6S)-5,6,7,8-tetrahydrofolate. It participates in cofactor biosynthesis; (R)-pantothenate biosynthesis; (R)-pantoate from 3-methyl-2-oxobutanoate: step 1/2. Functionally, catalyzes the reversible reaction in which hydroxymethyl group from 5,10-methylenetetrahydrofolate is transferred onto alpha-ketoisovalerate to form ketopantoate. The chain is 3-methyl-2-oxobutanoate hydroxymethyltransferase from Shewanella sp. (strain MR-7).